We begin with the raw amino-acid sequence, 263 residues long: 5'-nucleotidase SurE (263 aa).

The a divalent metal cation site is built by aspartate 11, aspartate 12, serine 42, and asparagine 96.

Belongs to the SurE nucleotidase family. It depends on a divalent metal cation as a cofactor.

The protein localises to the cytoplasm. The catalysed reaction is a ribonucleoside 5'-phosphate + H2O = a ribonucleoside + phosphate. Functionally, nucleotidase that shows phosphatase activity on nucleoside 5'-monophosphates. The polypeptide is 5'-nucleotidase SurE (Methanocorpusculum labreanum (strain ATCC 43576 / DSM 4855 / Z)).